Reading from the N-terminus, the 124-residue chain is Outer dense fiber protein 2 (124 aa).

Residues 13 to 124 (KEDSERLMEQ…EAIMEQLKEL (112 aa)) adopt a coiled-coil conformation.

This sequence belongs to the ODF2 family. Self-associates. Associates with microtubules and forms a fibrillar structure partially linked to the microtubule network. Interacts through its C-terminus with PLK1. Interacts with ODF1. Interacts with MARK4; the interaction is required for localization of ODF2 to centrioles. Interacts with TSSK4. Interacts with AKNA. Interacts with QRICH2. Interacts with CFAP58. Interacts with BBOF1. Interacts with CCDC38. Interacts with CCDC42. Post-translationally, tyrosine phosphorylated. As to expression, detected in sperm flagella (at protein level).

Its subcellular location is the cytoplasm. The protein localises to the cytoskeleton. It is found in the microtubule organizing center. The protein resides in the centrosome. It localises to the cell projection. Its subcellular location is the cilium. The protein localises to the centriole. It is found in the spindle pole. The protein resides in the flagellum. Seems to be a major component of sperm tail outer dense fibers (ODF). ODFs are filamentous structures located on the outside of the axoneme in the midpiece and principal piece of the mammalian sperm tail and may help to maintain the passive elastic structures and elastic recoil of the sperm tail. May have a modulating influence on sperm motility. Functions as a general scaffold protein that is specifically localized at the distal/subdistal appendages of mother centrioles. Component of the centrosome matrix required for the localization of PLK1 and NIN to the centrosomes. Required for the formation and/or maintenance of normal CETN1 assembly. This chain is Outer dense fiber protein 2, found in Mesocricetus auratus (Golden hamster).